A 310-amino-acid chain; its full sequence is Ribosomal RNA small subunit methyltransferase H (310 aa).

S-adenosyl-L-methionine-binding positions include 47–49 (GGH), D66, F93, D108, and Q115. The disordered stretch occupies residues 275–310 (RKPFMASEQEQADNPRSRSAKLRIARRRPDTARSGP). The segment covering 301-310 (RRPDTARSGP) has biased composition (basic and acidic residues).

Belongs to the methyltransferase superfamily. RsmH family.

The protein localises to the cytoplasm. The enzyme catalyses cytidine(1402) in 16S rRNA + S-adenosyl-L-methionine = N(4)-methylcytidine(1402) in 16S rRNA + S-adenosyl-L-homocysteine + H(+). Specifically methylates the N4 position of cytidine in position 1402 (C1402) of 16S rRNA. This chain is Ribosomal RNA small subunit methyltransferase H, found in Synechococcus sp. (strain CC9311).